Here is a 92-residue protein sequence, read N- to C-terminus: Small ribosomal subunit protein uS19 (92 aa).

Belongs to the universal ribosomal protein uS19 family.

Its function is as follows. Protein S19 forms a complex with S13 that binds strongly to the 16S ribosomal RNA. The chain is Small ribosomal subunit protein uS19 from Rickettsia bellii (strain OSU 85-389).